The following is a 518-amino-acid chain: Glutamate--cysteine ligase (518 aa).

Belongs to the glutamate--cysteine ligase type 1 family. Type 1 subfamily.

The enzyme catalyses L-cysteine + L-glutamate + ATP = gamma-L-glutamyl-L-cysteine + ADP + phosphate + H(+). It functions in the pathway sulfur metabolism; glutathione biosynthesis; glutathione from L-cysteine and L-glutamate: step 1/2. This Klebsiella pneumoniae subsp. pneumoniae (strain ATCC 700721 / MGH 78578) protein is Glutamate--cysteine ligase.